We begin with the raw amino-acid sequence, 166 residues long: HTH-type transcriptional regulator PecS (166 aa).

The region spanning 25-160 is the HTH marR-type domain; that stretch reads PMLVIGTLSR…LRALLGRVEK (136 aa).

The protein resides in the cytoplasm. The presence of PecM is required to ensure the full regulation of the pecS-pecM intergenic region by PecS. Functionally, negatively regulates the expression of genes encoding pectinase and cellulase, which play a major role in virulence, and the expression of the blue pigment indigoidine, which is implicated in pathogenicity and protection from oxidative stress. Represses the expression of genes involved in indigoidine biosynthesis by binding to indA and indC promoter regions. Also binds to promoter sites in the pecS-pecM intergenic region and negatively autoregulates its expression as well as that of pecM. In Dickeya dadantii (strain 3937) (Erwinia chrysanthemi (strain 3937)), this protein is HTH-type transcriptional regulator PecS.